We begin with the raw amino-acid sequence, 345 residues long: S-adenosylmethionine:tRNA ribosyltransferase-isomerase (345 aa).

This sequence belongs to the QueA family. In terms of assembly, monomer.

The protein resides in the cytoplasm. It catalyses the reaction 7-aminomethyl-7-carbaguanosine(34) in tRNA + S-adenosyl-L-methionine = epoxyqueuosine(34) in tRNA + adenine + L-methionine + 2 H(+). It functions in the pathway tRNA modification; tRNA-queuosine biosynthesis. In terms of biological role, transfers and isomerizes the ribose moiety from AdoMet to the 7-aminomethyl group of 7-deazaguanine (preQ1-tRNA) to give epoxyqueuosine (oQ-tRNA). This chain is S-adenosylmethionine:tRNA ribosyltransferase-isomerase, found in Helicobacter pylori (strain J99 / ATCC 700824) (Campylobacter pylori J99).